Reading from the N-terminus, the 1125-residue chain is Exportin-6 (1125 aa).

Alanine 2 carries the post-translational modification N-acetylalanine. The region spanning 31 to 97 (IEELLNNFAQ…RSCLPKLLLA (67 aa)) is the Importin N-terminal domain. A Phosphoserine modification is found at serine 199. Phosphothreonine occurs at positions 201 and 204. A phosphoserine mark is found at serine 208 and serine 224.

Belongs to the exportin family. As to quaternary structure, found in a complex with XPO6, Ran, ACTB and PFN1. Interacts with ACTB. Interacts with ACTB in a RanGTP-dependent manner.

It is found in the nucleus. It localises to the cytoplasm. In terms of biological role, mediates the nuclear export of actin and profilin-actin complexes in somatic cells. The sequence is that of Exportin-6 (Xpo6) from Mus musculus (Mouse).